A 201-amino-acid polypeptide reads, in one-letter code: Ephrin-A4 (201 aa).

The first 25 residues, 1–25 (MRLLPLLRTVLWAAFLGSPLRGGSS), serve as a signal peptide directing secretion. One can recognise an Ephrin RBD domain in the interval 26 to 155 (LRHVVYWNSS…RLQVSVCCKE (130 aa)). Asn-33 carries N-linked (GlcNAc...) asparagine glycosylation. 2 disulfide bridges follow: Cys-58–Cys-99 and Cys-86–Cys-144. Ser-170 carries GPI-anchor amidated serine lipidation. Positions 171-201 (GTSGWRGGDTPSPLCLLLLLLLLILRLLRIL) are cleaved as a propeptide — removed in mature form.

The protein belongs to the ephrin family. In terms of tissue distribution, expressed in the adult spleen, lymph node, prostate, ovary, small intestine, and colon, and in fetal heart, lung, liver and kidney. Also detected in hematopoietic cell lines.

The protein resides in the cell membrane. Its subcellular location is the secreted. Its function is as follows. Cell surface GPI-bound ligand for Eph receptors, a family of receptor tyrosine kinases which are crucial for migration, repulsion and adhesion during neuronal, vascular and epithelial development. Binds promiscuously Eph receptors residing on adjacent cells, leading to contact-dependent bidirectional signaling into neighboring cells. May play a role in the interaction between activated B-lymphocytes and dendritic cells in tonsils. This is Ephrin-A4 (EFNA4) from Homo sapiens (Human).